A 921-amino-acid polypeptide reads, in one-letter code: Collagen alpha-1(IX) chain (921 aa).

A signal peptide spans 1 to 23 (MKTCWKIPVFFFVCSFLEPWASA). The tract at residues 24–268 (AVKRRPRFPV…ITPSQTTDER (245 aa)) is nonhelical region (NC4). 2 disulfides stabilise this stretch: C44/C242 and C198/C252. The Laminin G-like domain maps to 50–244 (GQDDLPGFDL…LQWMLIHCDP (195 aa)). An N-linked (GlcNAc...) asparagine glycan is attached at N171. Positions 213, 215, and 253 each coordinate Zn(2+). Disordered regions lie at residues 254–759 (ELPA…APTD) and 783–905 (RPDS…EPAS). Collagen-like domains are found at residues 269 to 324 (GPPG…TPGA), 325 to 356 (DGLT…GFPG), 358 to 403 (GIPG…GTIG), 416 to 472 (PPGR…GLRG), 473 to 516 (ITGI…AGPK), 587 to 643 (EKGS…GKLG), 655 to 712 (GPPG…GEPG), and 713 to 755 (LRGP…PPGR). The segment at 269 to 405 (GPPGEQGPPG…PGPRGTIGFH (137 aa)) is triple-helical region (COL3). Composition is skewed to pro residues over residues 273–285 (EQGP…PPGV) and 298–307 (KGPPGPPGPA). The span at 368–383 (TAGLPGELGRVGPVGD) shows a compositional bias: low complexity. The span at 387–398 (RGPPGPPGPPGP) shows a compositional bias: pro residues. Residues 406–417 (DGDPLCPNACPP) are nonhelical region (NC3). Residues 418–756 (GRSGYPGLPG…PGVQGPPGRA (339 aa)) form a triple-helical region (COL2) region. Positions 479–489 (DKGEKGARGLD) are enriched in basic and acidic residues. Low complexity-rich tracts occupy residues 602–621 (NSGK…RGPQ) and 630–650 (LGPV…SPGL). The tract at residues 757–786 (PTDQHIKQVCMRVIQEHFAEMAASLKRPDS) is nonhelical region (NC2). The tract at residues 787–901 (GATGLPGRPG…PGPPGLPGFC (115 aa)) is triple-helical region (COL1). 2 consecutive Collagen-like domains span residues 790–847 (GLPG…GPPG) and 848–899 (RGPN…GLPG). Residues 794 to 804 (RPGPPGPPGPP) are compositionally biased toward pro residues. The span at 833 to 845 (PKGDLGEKGERGP) shows a compositional bias: basic and acidic residues. Residues 888–897 (VPGPPGPPGL) are compositionally biased toward pro residues. Residues 902-921 (EPASCTMQAGQRAFNKGPDP) form a nonhelical region (NC1) region.

Belongs to the fibril-associated collagens with interrupted helices (FACIT) family. In terms of assembly, heterotrimer of an alpha 1(IX), an alpha 2(IX) and an alpha 3(IX) chain. Covalently linked to the telopeptides of type II collagen by lysine-derived cross-links. Post-translationally, prolines at the third position of the tripeptide repeating unit (G-X-Y) are hydroxylated in some or all of the chains.

It is found in the secreted. It localises to the extracellular space. The protein resides in the extracellular matrix. Its function is as follows. Structural component of hyaline cartilage and vitreous of the eye. The sequence is that of Collagen alpha-1(IX) chain (COL9A1) from Homo sapiens (Human).